The following is a 192-amino-acid chain: dTTP/UTP pyrophosphatase (192 aa).

The active-site Proton acceptor is Asp-71.

This sequence belongs to the Maf family. YhdE subfamily. The cofactor is a divalent metal cation.

The protein resides in the cytoplasm. The enzyme catalyses dTTP + H2O = dTMP + diphosphate + H(+). It carries out the reaction UTP + H2O = UMP + diphosphate + H(+). Its function is as follows. Nucleoside triphosphate pyrophosphatase that hydrolyzes dTTP and UTP. May have a dual role in cell division arrest and in preventing the incorporation of modified nucleotides into cellular nucleic acids. This is dTTP/UTP pyrophosphatase from Clostridium kluyveri (strain NBRC 12016).